A 93-amino-acid polypeptide reads, in one-letter code: Cobalt transport protein CbiN (93 aa).

2 helical membrane-spanning segments follow: residues 5 to 25 (LMLLVMVVALVILPFFINHGG) and 63 to 83 (LLFTLQGSLGAAVIFYILGYC).

This sequence belongs to the CbiN family. As to quaternary structure, forms an energy-coupling factor (ECF) transporter complex composed of an ATP-binding protein (A component, CbiO), a transmembrane protein (T component, CbiQ) and 2 possible substrate-capture proteins (S components, CbiM and CbiN) of unknown stoichimetry.

It is found in the cell inner membrane. It participates in cofactor biosynthesis; adenosylcobalamin biosynthesis. In terms of biological role, part of the energy-coupling factor (ECF) transporter complex CbiMNOQ involved in cobalt import. This is Cobalt transport protein CbiN from Salmonella paratyphi B (strain ATCC BAA-1250 / SPB7).